The sequence spans 447 residues: Elongation factor 1-alpha (447 aa).

One can recognise a tr-type G domain in the interval 5 to 230; it reads KIHISIVVIG…DQINEPKRPS (226 aa). The G1 stretch occupies residues 14 to 21; that stretch reads GHVDSGKS. 14–21 contributes to the GTP binding site; sequence GHVDSGKS. Lys55 carries the N6,N6-dimethyllysine modification. The interval 70–74 is G2; sequence GITID. Lys79 carries the N6,N6,N6-trimethyllysine modification. The interval 91–94 is G3; that stretch reads DAPG. Residues 91–95 and 153–156 contribute to the GTP site; these read DAPGH and NKMD. Positions 153–156 are G4; the sequence is NKMD. N6,N6,N6-trimethyllysine is present on Lys187. The interval 194–196 is G5; the sequence is SGF. Lys261 carries the N6-methyllysine modification. Glu289 bears the 5-glutamyl glycerylphosphorylethanolamine mark. Lys306 carries the N6,N6,N6-trimethyllysine modification. Glu362 bears the 5-glutamyl glycerylphosphorylethanolamine mark. Lys396 is modified (N6,N6,N6-trimethyllysine).

It belongs to the TRAFAC class translation factor GTPase superfamily. Classic translation factor GTPase family. EF-Tu/EF-1A subfamily.

Its subcellular location is the cytoplasm. Functionally, this protein promotes the GTP-dependent binding of aminoacyl-tRNA to the A-site of ribosomes during protein biosynthesis. The protein is Elongation factor 1-alpha of Hordeum vulgare (Barley).